The chain runs to 470 residues: Cannabinoid receptor 1 (470 aa).

Residues 1 to 121 (MKSILDGLAD…TPSQQLVIAA (121 aa)) are Extracellular-facing. The interval 2-23 (KSILDGLADTTFRTITTDLLYL) is required for mitochondrial localization. N-linked (GlcNAc...) asparagine glycosylation is found at asparagine 78 and asparagine 84. A helical transmembrane segment spans residues 122-142 (LSIILGTFTVLENMLVLVVIV). The Cytoplasmic portion of the chain corresponds to 143 to 154 (QSRSLRCRPSYH). The chain crosses the membrane as a helical span at residues 155 to 175 (FIGSLAVADLLGSVIFVYSFV). Residues 176 to 187 (DFHVFHRKDSPN) are Extracellular-facing. Residues 188–208 (VFLFKLGGVTASFTASVGSLF) traverse the membrane as a helical segment. Residues 209-232 (LTAIDRYISIHRPMSYKRIVTRTK) are Cytoplasmic-facing. A helical transmembrane segment spans residues 233 to 253 (AVIAFCMMWTIAIVIAVLPLF). Residues 254 to 277 (GWNCIKLRSVCSDIFPLIDETYLM) lie on the Extracellular side of the membrane. A helical membrane pass occupies residues 278–298 (FWIGVTSVLLLFIVYAYMYIL). Over 299–344 (WKAHNHAVRMLQRGTQKSIIVHTSEDGKVHITRPDQTRMDIRLAKT) the chain is Cytoplasmic. A helical membrane pass occupies residues 345–365 (LVLILVVLIICWGPLMAIMVY). Residues 366 to 377 (DVFGKINKTIKT) lie on the Extracellular side of the membrane. Asparagine 372 carries an N-linked (GlcNAc...) asparagine glycan. A helical transmembrane segment spans residues 378–398 (VFAFCSVLCLLNSTVNPIIYA). At 399–470 (LRSKDLRNAF…VSTDTSAEAV (72 aa)) the chain is on the cytoplasmic side. The S-palmitoyl cysteine moiety is linked to residue cysteine 415.

Belongs to the G-protein coupled receptor 1 family. Post-translationally, palmitoylation at Cys-415 is important for recruitment at both plasma membrane and lipid rafts and association with G protein alpha subunits. Expressed in neurons, especially in the olfactory bulbs, telencephalic pallium, and hypothalamus and also in the midbrain and hindbrain (in the mesencephalic tegmentum and dorsolateral rhombencephalon). Expressed also in the spinal cord.

Its subcellular location is the cell membrane. The protein localises to the mitochondrion outer membrane. It is found in the cell projection. The protein resides in the axon. It localises to the presynapse. Its function is as follows. G-protein coupled receptor for cannabinoids. Mediates many cannabinoid-induced effects in the central nervous system (CNS), as well as in peripheral tissues. Regulates cellular respiration and energy production in response to cannabinoids. Signaling typically involves reduction in cyclic AMP. The chain is Cannabinoid receptor 1 (cnr1) from Xenopus laevis (African clawed frog).